We begin with the raw amino-acid sequence, 182 residues long: MGLLSILRKLKSAPDQEVRILLLGLDNAGKTTLLKQLASEDISHITPTQGFNIKSVQSQGFKLNVWDIGGQRKIRPYWRNYFENTDILIYVIDSADRKRFEETGQELAELLEEEKLSCVPVLIFANKQDLLTAAPASEIAEGLNLHTIRDRFWQIQSCSALTGEGVQDGMNWVCKNVSAKKK.

The N-myristoyl glycine moiety is linked to residue glycine 2. The residue at position 5 (serine 5) is a Phosphoserine. Residues 24–31, threonine 48, 67–71, glycine 70, 126–129, and 159–161 each bind GTP; these read GLDNAGKT, DIGGQ, NKQD, and SAL. Residues threonine 31 and threonine 48 each contribute to the Mg(2+) site.

This sequence belongs to the small GTPase superfamily. Arf family. In terms of assembly, found in a complex with ARL3, RP2 and UNC119 (or UNC119B); RP2 induces hydrolysis of GTP ARL3 in the complex, leading to the release of UNC119 (or UNC119B). Interacts with RP2; interaction is direct and stimulated with the activated GTP-bound form of ARL3. Interacts with SYS1. Interacts with ARL2BP; the GTP-bound form interacts with ARL2BP. Microtubule-associated protein. Does not interact with TBCC. Interacts with RP2. Interacts with PDE6D; the interaction occurs specifically with the GTP-bound form of ARL3. Interacts with GGA1; the interaction recruits PKD1:PKD2 complex to trans-Golgi network and is required for ciliary targeting of PKD1:PKD2 complex. Interacts with DNAAF9.

The protein resides in the golgi apparatus membrane. Its subcellular location is the cytoplasm. The protein localises to the cytoskeleton. It is found in the spindle. It localises to the nucleus. The protein resides in the microtubule organizing center. Its subcellular location is the centrosome. The protein localises to the cell projection. It is found in the cilium. Functionally, small GTP-binding protein which cycles between an inactive GDP-bound and an active GTP-bound form, and the rate of cycling is regulated by guanine nucleotide exchange factors (GEF) and GTPase-activating proteins (GAP). Required for normal cytokinesis and cilia signaling. Requires assistance from GTPase-activating proteins (GAPs) like RP2 and PDE6D, in order to cycle between inactive GDP-bound and active GTP-bound forms. Required for targeting proteins to the cilium, including myristoylated NPHP3 and prenylated INPP5E. Targets NPHP3 to the ciliary membrane by releasing myristoylated NPHP3 from UNC119B cargo adapter into the cilium. Required for PKD1:PKD2 complex targeting from the trans-Golgi network to the cilium. This chain is ADP-ribosylation factor-like protein 3 (ARL3), found in Bos taurus (Bovine).